A 73-amino-acid chain; its full sequence is Sec-independent protein translocase protein TatA (73 aa).

The chain crosses the membrane as a helical span at residues 1–21 (MGSFSIGHWLIVLAIIVLLFG). The segment at 43–73 (MEDTTPEKSEKVEHKEESATSQKIEETTKNA) is disordered.

It belongs to the TatA/E family. As to quaternary structure, the Tat system comprises two distinct complexes: a TatABC complex, containing multiple copies of TatA, TatB and TatC subunits, and a separate TatA complex, containing only TatA subunits. Substrates initially bind to the TatABC complex, which probably triggers association of the separate TatA complex to form the active translocon.

The protein resides in the cell inner membrane. Functionally, part of the twin-arginine translocation (Tat) system that transports large folded proteins containing a characteristic twin-arginine motif in their signal peptide across membranes. TatA could form the protein-conducting channel of the Tat system. The chain is Sec-independent protein translocase protein TatA from Campylobacter concisus (strain 13826).